Consider the following 334-residue polypeptide: Beta-hexosaminidase (334 aa).

Substrate contacts are provided by residues Asp-62, Arg-70, Arg-131, and 161 to 162 (KH). His-174 functions as the Proton donor/acceptor in the catalytic mechanism. Asp-246 (nucleophile) is an active-site residue.

This sequence belongs to the glycosyl hydrolase 3 family. NagZ subfamily.

The protein localises to the cytoplasm. It catalyses the reaction Hydrolysis of terminal non-reducing N-acetyl-D-hexosamine residues in N-acetyl-beta-D-hexosaminides.. It functions in the pathway cell wall biogenesis; peptidoglycan recycling. Functionally, plays a role in peptidoglycan recycling by cleaving the terminal beta-1,4-linked N-acetylglucosamine (GlcNAc) from peptide-linked peptidoglycan fragments, giving rise to free GlcNAc, anhydro-N-acetylmuramic acid and anhydro-N-acetylmuramic acid-linked peptides. The protein is Beta-hexosaminidase of Tolumonas auensis (strain DSM 9187 / NBRC 110442 / TA 4).